The following is a 265-amino-acid chain: Pyridoxine 5'-phosphate synthase (265 aa).

Residue N6 coordinates 3-amino-2-oxopropyl phosphate. 8–9 (DH) lines the 1-deoxy-D-xylulose 5-phosphate pocket. R17 provides a ligand contact to 3-amino-2-oxopropyl phosphate. H42 serves as the catalytic Proton acceptor. 1-deoxy-D-xylulose 5-phosphate contacts are provided by R44 and H49. E69 acts as the Proton acceptor in catalysis. T99 contributes to the 1-deoxy-D-xylulose 5-phosphate binding site. The active-site Proton donor is the H213. Residues G214 and 235-236 (GQ) each bind 3-amino-2-oxopropyl phosphate.

This sequence belongs to the PNP synthase family. In terms of assembly, homooctamer; tetramer of dimers.

It localises to the cytoplasm. The catalysed reaction is 3-amino-2-oxopropyl phosphate + 1-deoxy-D-xylulose 5-phosphate = pyridoxine 5'-phosphate + phosphate + 2 H2O + H(+). It participates in cofactor biosynthesis; pyridoxine 5'-phosphate biosynthesis; pyridoxine 5'-phosphate from D-erythrose 4-phosphate: step 5/5. Catalyzes the complicated ring closure reaction between the two acyclic compounds 1-deoxy-D-xylulose-5-phosphate (DXP) and 3-amino-2-oxopropyl phosphate (1-amino-acetone-3-phosphate or AAP) to form pyridoxine 5'-phosphate (PNP) and inorganic phosphate. The polypeptide is Pyridoxine 5'-phosphate synthase (Nitratiruptor sp. (strain SB155-2)).